We begin with the raw amino-acid sequence, 422 residues long: 5-hydroxytryptamine receptor 1A (422 aa).

Residues 1 to 23 (MDVLSPGQGNNTTSPPAPFETGG) form a disordered region. Residues 1-38 (MDVLSPGQGNNTTSPPAPFETGGNTTGISDVTFSYQVI) lie on the Extracellular side of the membrane. Residues Asn10, Asn11, and Asn24 are each glycosylated (N-linked (GlcNAc...) asparagine). The chain crosses the membrane as a helical span at residues 39–59 (TSLLLGTLIFCAVLGNACVVA). Over 60 to 73 (AIALERSLQNVANY) the chain is Cytoplasmic. Residues 74–98 (LIGSLAVTDLMVSVLVLPMAALYQV) traverse the membrane as a helical segment. Residues 99-107 (LNKWTLGQV) are Extracellular-facing. A helical transmembrane segment spans residues 108 to 132 (TCDLFIALDVLCCTSSILHLCAIAL). Cys109 and Cys187 are disulfide-bonded. Positions 116 and 120 each coordinate serotonin. Residues 133–135 (DRY) carry the DRY motif; important for ligand-induced conformation changes motif. The Cytoplasmic segment spans residues 133 to 152 (DRYWAITDPIDYVNKRTPRR). The helical transmembrane segment at 153–174 (AAALISLTWLIGFLISIPPMLG) threads the bilayer. The Extracellular segment spans residues 175-193 (WRTPEDRSDPDACTISKDH). Residues 194–216 (GYTIYSTFGAFYIPLLLMLVLYG) form a helical membrane-spanning segment. Residues 217–346 (RIFRAARFRI…LARERKTVKT (130 aa)) are Cytoplasmic-facing. Residues 235-262 (KTGADTRHGASPAPQPKKSVNGESGSRN) form a disordered region. Positions 314, 345, 346, and 352 each coordinate 1D-myo-inositol 4-phosphate. The chain crosses the membrane as a helical span at residues 347–370 (LGIIMGTFILCWLPFFIVALVLPF). Residues 371–378 (CESSCHMP) lie on the Extracellular side of the membrane. Residues 379–403 (TLLGAIINWLGYSNSLLNPVIYAYF) traverse the membrane as a helical segment. The NPxxY motif; important for ligand-induced conformation changes and signaling motif lies at 396–400 (NPVIY). 1D-myo-inositol 4-phosphate-binding residues include Phe403, Asn404, and Lys405. Over 404–422 (NKDFQNAFKKIIKCKFCRQ) the chain is Cytoplasmic.

Belongs to the G-protein coupled receptor 1 family. 5-hydroxytryptamine receptor subfamily. HTR1A sub-subfamily. In terms of assembly, heterodimer; heterodimerizes with GPER1. Interacts with YIF1B. Interacts with GPR39 and GALR1.

It localises to the cell membrane. It is found in the cell projection. The protein resides in the dendrite. Its activity is regulated as follows. G-protein coupled receptor activity is regulated by lipids: phosphatidylinositol 4-phosphate increases HTR1A-mediated activity. Its function is as follows. G-protein coupled receptor for 5-hydroxytryptamine (serotonin). Also functions as a receptor for various drugs and psychoactive substances. Ligand binding causes a conformation change that triggers signaling via guanine nucleotide-binding proteins (G proteins) and modulates the activity of downstream effectors, such as adenylate cyclase. HTR1A is coupled to G(i)/G(o) G alpha proteins and mediates inhibitory neurotransmission: signaling inhibits adenylate cyclase activity and activates a phosphatidylinositol-calcium second messenger system that regulates the release of Ca(2+) ions from intracellular stores. Beta-arrestin family members regulate signaling by mediating both receptor desensitization and resensitization processes. This chain is 5-hydroxytryptamine receptor 1A (HTR1A), found in Gorilla gorilla gorilla (Western lowland gorilla).